The following is a 44-amino-acid chain: Photosystem I reaction center subunit IX (44 aa).

Residues 7-27 form a helical membrane-spanning segment; it reads YLSVAPVLSTLWFGALAGLLI.

Belongs to the PsaJ family.

Its subcellular location is the plastid. It localises to the chloroplast thylakoid membrane. Its function is as follows. May help in the organization of the PsaE and PsaF subunits. The chain is Photosystem I reaction center subunit IX from Oryza nivara (Indian wild rice).